The primary structure comprises 367 residues: Histidinol-phosphate aminotransferase (367 aa).

Lysine 221 carries the post-translational modification N6-(pyridoxal phosphate)lysine.

This sequence belongs to the class-II pyridoxal-phosphate-dependent aminotransferase family. Histidinol-phosphate aminotransferase subfamily. In terms of assembly, homodimer. It depends on pyridoxal 5'-phosphate as a cofactor.

It catalyses the reaction L-histidinol phosphate + 2-oxoglutarate = 3-(imidazol-4-yl)-2-oxopropyl phosphate + L-glutamate. It participates in amino-acid biosynthesis; L-histidine biosynthesis; L-histidine from 5-phospho-alpha-D-ribose 1-diphosphate: step 7/9. This chain is Histidinol-phosphate aminotransferase, found in Paracoccus denitrificans (strain Pd 1222).